The sequence spans 722 residues: Ribosomal RNA large subunit methyltransferase K/L (722 aa).

One can recognise a THUMP domain in the interval 43–154 (IGLRACLWSR…GNEGRVGIDL (112 aa)).

This sequence belongs to the methyltransferase superfamily. RlmKL family.

Its subcellular location is the cytoplasm. The catalysed reaction is guanosine(2445) in 23S rRNA + S-adenosyl-L-methionine = N(2)-methylguanosine(2445) in 23S rRNA + S-adenosyl-L-homocysteine + H(+). It catalyses the reaction guanosine(2069) in 23S rRNA + S-adenosyl-L-methionine = N(2)-methylguanosine(2069) in 23S rRNA + S-adenosyl-L-homocysteine + H(+). Functionally, specifically methylates the guanine in position 2445 (m2G2445) and the guanine in position 2069 (m7G2069) of 23S rRNA. This is Ribosomal RNA large subunit methyltransferase K/L from Magnetococcus marinus (strain ATCC BAA-1437 / JCM 17883 / MC-1).